The following is a 201-amino-acid chain: Transcriptional regulator GfcR (201 aa).

Belongs to the purine/pyrimidine phosphoribosyltransferase family. GfcR subfamily.

In Methanobrevibacter smithii (strain ATCC 35061 / DSM 861 / OCM 144 / PS), this protein is Transcriptional regulator GfcR.